Reading from the N-terminus, the 357-residue chain is Protein-arginine kinase (357 aa).

Residues 24 to 256 (VIISSRVRLA…LQLVTQERAA (233 aa)) form the Phosphagen kinase C-terminal domain. ATP-binding positions include 27-31 (SSRVR), His93, Arg127, 178-182 (RASVM), and 209-214 (RGLYGE). Positions 339-344 (RDIFRA) match the RDXXRA motif of the pArg binding pocket involved in allosteric regulation motif.

This sequence belongs to the ATP:guanido phosphotransferase family.

It carries out the reaction L-arginyl-[protein] + ATP = N(omega)-phospho-L-arginyl-[protein] + ADP + H(+). With respect to regulation, appears to be allosterically activated by the binding of pArg-containing polypeptides to the pArg-binding pocket localized in the C-terminal domain of McsB. Functionally, catalyzes the specific phosphorylation of arginine residues in proteins. The sequence is that of Protein-arginine kinase from Desulforamulus reducens (strain ATCC BAA-1160 / DSM 100696 / MI-1) (Desulfotomaculum reducens).